Reading from the N-terminus, the 261-residue chain is Carnitinyl-CoA dehydratase (261 aa).

Residue Glu-111 is the Nucleophile of the active site. The active-site Proton acceptor is Glu-131.

Belongs to the enoyl-CoA hydratase/isomerase family.

It catalyses the reaction (R)-carnitinyl-CoA = crotonobetainyl-CoA + H2O. The protein operates within amine and polyamine metabolism; carnitine metabolism. Its function is as follows. Catalyzes the reversible dehydration of L-carnitinyl-CoA to crotonobetainyl-CoA. In Salmonella typhimurium (strain LT2 / SGSC1412 / ATCC 700720), this protein is Carnitinyl-CoA dehydratase.